The chain runs to 427 residues: Enolase (427 aa).

Gln163 serves as a coordination point for (2R)-2-phosphoglycerate. The active-site Proton donor is Glu205. 3 residues coordinate Mg(2+): Asp242, Glu285, and Asp312. Residues Lys337, Arg366, Ser367, and Lys388 each contribute to the (2R)-2-phosphoglycerate site. Lys337 (proton acceptor) is an active-site residue.

Belongs to the enolase family. Requires Mg(2+) as cofactor.

It localises to the cytoplasm. Its subcellular location is the secreted. The protein resides in the cell surface. It carries out the reaction (2R)-2-phosphoglycerate = phosphoenolpyruvate + H2O. The protein operates within carbohydrate degradation; glycolysis; pyruvate from D-glyceraldehyde 3-phosphate: step 4/5. Its function is as follows. Catalyzes the reversible conversion of 2-phosphoglycerate (2-PG) into phosphoenolpyruvate (PEP). It is essential for the degradation of carbohydrates via glycolysis. This Nitrobacter hamburgensis (strain DSM 10229 / NCIMB 13809 / X14) protein is Enolase.